The primary structure comprises 1064 residues: Rab GTPase-activating protein 1 (1064 aa).

The interval 1-101 (MDDKASVGKI…SNQLSASSTI (101 aa)) is disordered. The span at 7–22 (VGKISVSSDSVSTLNS) shows a compositional bias: low complexity. S42 bears the Phosphoserine mark. A compositionally biased stretch (polar residues) spans 91-101 (LSNQLSASSTI). A PID domain is found at 137–293 (EDSVVFNKLT…IFTFSVSLEI (157 aa)). Phosphoserine is present on S355. A disordered region spans residues 478–520 (RERRKTTASPSVRLPQSGSQSSMIPSPPEDDEEEDNDEPLLSG). Residues 484–501 (TASPSVRLPQSGSQSSMI) show a composition bias toward polar residues. Over residues 505–515 (PEDDEEEDNDE) the composition is skewed to acidic residues. The Rab-GAP TBC domain occupies 561-747 (GVPEALRGEV…HIIDLLLCEG (187 aa)). Residues 805–1038 (SQKKLKKFEK…HLGLALSEVQ (234 aa)) are a coiled coil. T991 carries the phosphothreonine modification.

Interacts with RAB6A and tubulin gamma.

It is found in the cytoplasm. The protein localises to the cytosol. It localises to the cytoskeleton. Its subcellular location is the microtubule organizing center. The protein resides in the centrosome. Its function is as follows. May act as a GTPase-activating protein of RAB6A. May play a role in microtubule nucleation by centrosome. May participate in a RAB6A-mediated pathway involved in the metaphase-anaphase transition. The chain is Rab GTPase-activating protein 1 from Mus musculus (Mouse).